The sequence spans 172 residues: Myosin regulatory light chain (172 aa).

T17 is subject to Phosphothreonine. The residue at position 18 (S18) is a Phosphoserine. EF-hand domains lie at 27-62 (AQIQEFKEAFNMIDQNRDGFIDQEDLKDMFASLGKE), 98-133 (DPEEVIRNAFQCFDEDNSGKLNEEHLRELLTTMGER), and 134-168 (YSEEQVDELFRDAPIKGGQFDYVEFTRMLKHGTKD). Ca(2+)-binding residues include D40, N42, D44, and D51.

As to quaternary structure, myosin is a hexamer of 2 heavy chains and 4 light chains (two regulatory light chains and two essential light chains). In terms of processing, may be phosphorylated by let-502 or/and pak-1 and dephosphorylated by mel-11 to regulate its activation and myosin II-mediated contraction. Expressed in the spermathecal and uterine walls. Weak expression in gonadal sheath and intestinal muscle. Not detected in vulval, pharyngeal or body wall muscles.

It localises to the cytoplasm. It is found in the cytoskeleton. In terms of biological role, regulates myosin II activity and organization during embryo elongation. May be involved in the organization of mlc-5 into bundles. Required maternally for cytokinesis during meiosis and mitosis in the early embryo and for the establishment of embryonic anterior-posterior polarity. This is Myosin regulatory light chain from Caenorhabditis elegans.